Consider the following 474-residue polypeptide: tRNA-2-methylthio-N(6)-dimethylallyladenosine synthase (474 aa).

The 118-residue stretch at 21-138 (ERVYVETQGC…LPQMLARRRS (118 aa)) folds into the MTTase N-terminal domain. Residues C30, C67, C101, C175, C179, and C182 each coordinate [4Fe-4S] cluster. The Radical SAM core domain maps to 161–395 (RAEGPTAYVS…ARLHEQQSAA (235 aa)). One can recognise a TRAM domain in the interval 397–460 (RALLGTRQSV…THSLRGRVVS (64 aa)).

This sequence belongs to the methylthiotransferase family. MiaB subfamily. As to quaternary structure, monomer. It depends on [4Fe-4S] cluster as a cofactor.

It is found in the cytoplasm. The enzyme catalyses N(6)-dimethylallyladenosine(37) in tRNA + (sulfur carrier)-SH + AH2 + 2 S-adenosyl-L-methionine = 2-methylsulfanyl-N(6)-dimethylallyladenosine(37) in tRNA + (sulfur carrier)-H + 5'-deoxyadenosine + L-methionine + A + S-adenosyl-L-homocysteine + 2 H(+). Functionally, catalyzes the methylthiolation of N6-(dimethylallyl)adenosine (i(6)A), leading to the formation of 2-methylthio-N6-(dimethylallyl)adenosine (ms(2)i(6)A) at position 37 in tRNAs that read codons beginning with uridine. This Halorhodospira halophila (strain DSM 244 / SL1) (Ectothiorhodospira halophila (strain DSM 244 / SL1)) protein is tRNA-2-methylthio-N(6)-dimethylallyladenosine synthase.